The primary structure comprises 299 residues: Zinc finger protein 414 (299 aa).

Composition is skewed to polar residues over residues 1–20 and 70–80; these read MEELSGPSSDTLATVESSSN and SCQTSSTTRGV. Residues 1–102 are disordered; sequence MEELSGPSSD…PPPGKQIPCS (102 aa). 2 C2H2-type zinc fingers span residues 99 to 123 and 135 to 159; these read IPCSSPGCSLSFPSVRDLAQHLRTH and FRCSALSCTESFPSMQELVAHGKLH. A C2H2-type 3; degenerate zinc finger spans residues 166-190; sequence FKCENCLLRFRTHRSLFKHLHVCID. Disordered stretches follow at residues 193-228 and 254-299; these read QNPAPPPPPALDKEPPVPERPPESDPSSSLGLPFPL and PRLR…GACR. Basic and acidic residues predominate over residues 203–215; sequence LDKEPPVPERPPE. Over residues 217–228 the composition is skewed to low complexity; the sequence is DPSSSLGLPFPL. The segment covering 268-285 has biased composition (polar residues); the sequence is TSSTAIWKKSQGATSSPR.

Belongs to the krueppel C2H2-type zinc-finger protein family.

It is found in the nucleus. In terms of biological role, may be involved in transcriptional regulation. The protein is Zinc finger protein 414 (Znf414) of Rattus norvegicus (Rat).